The chain runs to 256 residues: Distal membrane-arm assembly complex protein 2 (256 aa).

Phosphoserine is present on Ser252.

It belongs to the ATP synthase subunit s family. Interacts with incompletely assembled mitochondrial NADH:ubiquinone oxidoreductase complex (complex I).

The protein localises to the mitochondrion. Required for the assembly of the mitochondrial NADH:ubiquinone oxidoreductase complex (complex I). Involved in the assembly of the distal region of complex I. The polypeptide is Distal membrane-arm assembly complex protein 2 (Macaca fascicularis (Crab-eating macaque)).